Reading from the N-terminus, the 370-residue chain is Gametogenetin-binding protein 1 (370 aa).

Disordered regions lie at residues 26–114 (VGSK…QTLT) and 240–263 (PAAP…EEAV). The span at 31–49 (GSKSTNKPLTRSQPSSSWE) shows a compositional bias: polar residues. The required for induction of mitochondrial fragmentation stretch occupies residues 225 to 370 (LYKQLQKSAM…DEMGNWPPPD (146 aa)). The segment covering 250–260 (GLPHEEKGERE) has biased composition (basic and acidic residues). Residues 298–370 (KKFRSTDTVG…DEMGNWPPPD (73 aa)) are interaction with GGN.

As to quaternary structure, interacts with CCDC159. Interacts with isoform 1 and isoform 2 of GGN. As to expression, testis-specific. In the testis, expressed only in germ cells and not in somatic cells. Expression starts in late primary spermatocytes in stage X-XII tubules and gradually increases towards step 1-3 spermatids in stage I-III tubules. Expression then declines continuously and disappears after step 7 spermatids in stage VII tubules (at protein level).

The protein resides in the cytoplasm. It is found in the membrane. It localises to the golgi apparatus. The protein localises to the mitochondrion intermembrane space. Induces mitochondrial fragmentation, possibly by promoting DNM1L-dependent fission and may play a role in mitochondrial morphogenesis during spermatogenesis. The polypeptide is Gametogenetin-binding protein 1 (Ggnbp1) (Mus musculus (Mouse)).